We begin with the raw amino-acid sequence, 611 residues long: Poly(3-hydroxyalkanoate) polymerase subunit PhaC (611 aa).

C349 is an active-site residue.

Belongs to the PHA/PHB synthase family. Type I PhaC subfamily. Monomer.

It localises to the cytoplasm. It carries out the reaction (3R)-3-hydroxybutanoyl-CoA + [(3R)-hydroxybutanoate](n) = [(3R)-hydroxybutanoate](n+1) + CoA. It participates in biopolymer metabolism; poly-(R)-3-hydroxybutanoate biosynthesis. In terms of biological role, polymerizes D(-)-3-hydroxybutyryl-CoA to create PHB which consists of thousands of hydroxybutyrate molecules linked end to end. PHB serves as an intracellular energy reserve material when cells grow under conditions of nutrient limitation. This Rhizobium meliloti (strain 1021) (Ensifer meliloti) protein is Poly(3-hydroxyalkanoate) polymerase subunit PhaC.